Here is a 163-residue protein sequence, read N- to C-terminus: Lipoprotein signal peptidase (163 aa).

4 helical membrane passes run 9–29 (AWPWLWLSVLVILLDQLSKYL), 42–62 (ILPFLNFTLNYNTGAAFSFLG), 67–87 (WQIIFFAAISFVVSIFLILWL), and 93–113 (SEIMMSLGLSLIIGGALGNFI). Active-site residues include aspartate 123 and aspartate 141. Residues 137-157 (FNVADSAICVGVFLLIVYMLL) form a helical membrane-spanning segment.

Belongs to the peptidase A8 family.

The protein resides in the cell inner membrane. The catalysed reaction is Release of signal peptides from bacterial membrane prolipoproteins. Hydrolyzes -Xaa-Yaa-Zaa-|-(S,diacylglyceryl)Cys-, in which Xaa is hydrophobic (preferably Leu), and Yaa (Ala or Ser) and Zaa (Gly or Ala) have small, neutral side chains.. The protein operates within protein modification; lipoprotein biosynthesis (signal peptide cleavage). This protein specifically catalyzes the removal of signal peptides from prolipoproteins. In Coxiella burnetii (strain Dugway 5J108-111), this protein is Lipoprotein signal peptidase.